Here is a 129-residue protein sequence, read N- to C-terminus: Fluoride-specific ion channel FluC 2 (129 aa).

4 helical membrane passes run 9–29 (LGTLISVFFFGMIGGTLRYLL), 37–57 (GTILVNLIGSFCLAFLTYYVI), 74–94 (MVGAFTTFSTFTVDILGLSTF), and 100–120 (YLLISVVGGFLLAYTGMILGI). Residues Gly-76 and Thr-79 each contribute to the Na(+) site.

Belongs to the fluoride channel Fluc/FEX (TC 1.A.43) family.

The protein localises to the cell membrane. It catalyses the reaction fluoride(in) = fluoride(out). With respect to regulation, na(+) is not transported, but it plays an essential structural role and its presence is essential for fluoride channel function. Functionally, fluoride-specific ion channel. Important for reducing fluoride concentration in the cell, thus reducing its toxicity. The polypeptide is Fluoride-specific ion channel FluC 2 (Ligilactobacillus salivarius (strain UCC118) (Lactobacillus salivarius)).